The sequence spans 389 residues: Phospho-N-acetylmuramoyl-pentapeptide-transferase (389 aa).

The next 10 membrane-spanning stretches (helical) occupy residues 25–45 (RAVM…PWVI), 74–94 (MGGV…CDWG), 97–117 (FIWV…VDDY), 134–154 (FFWQ…SVSE), 190–210 (ISYP…IVGS), 222–242 (GLVI…AYVM), 259–279 (AGEL…FLWF), 286–306 (VFMG…VAVI), 311–331 (IVLF…MAQV), and 366–386 (QVTV…LSTL).

The protein belongs to the glycosyltransferase 4 family. MraY subfamily. It depends on Mg(2+) as a cofactor.

It is found in the cell inner membrane. The enzyme catalyses UDP-N-acetyl-alpha-D-muramoyl-L-alanyl-gamma-D-glutamyl-meso-2,6-diaminopimeloyl-D-alanyl-D-alanine + di-trans,octa-cis-undecaprenyl phosphate = di-trans,octa-cis-undecaprenyl diphospho-N-acetyl-alpha-D-muramoyl-L-alanyl-D-glutamyl-meso-2,6-diaminopimeloyl-D-alanyl-D-alanine + UMP. Its pathway is cell wall biogenesis; peptidoglycan biosynthesis. In terms of biological role, catalyzes the initial step of the lipid cycle reactions in the biosynthesis of the cell wall peptidoglycan: transfers peptidoglycan precursor phospho-MurNAc-pentapeptide from UDP-MurNAc-pentapeptide onto the lipid carrier undecaprenyl phosphate, yielding undecaprenyl-pyrophosphoryl-MurNAc-pentapeptide, known as lipid I. This Cupriavidus necator (strain ATCC 17699 / DSM 428 / KCTC 22496 / NCIMB 10442 / H16 / Stanier 337) (Ralstonia eutropha) protein is Phospho-N-acetylmuramoyl-pentapeptide-transferase.